Consider the following 291-residue polypeptide: 4-hydroxy-tetrahydrodipicolinate synthase (291 aa).

Residue Thr45 coordinates pyruvate. The active-site Proton donor/acceptor is Tyr133. Residue Lys161 is the Schiff-base intermediate with substrate of the active site. Ile203 contacts pyruvate.

The protein belongs to the DapA family. Homotetramer; dimer of dimers.

The protein resides in the cytoplasm. It catalyses the reaction L-aspartate 4-semialdehyde + pyruvate = (2S,4S)-4-hydroxy-2,3,4,5-tetrahydrodipicolinate + H2O + H(+). It functions in the pathway amino-acid biosynthesis; L-lysine biosynthesis via DAP pathway; (S)-tetrahydrodipicolinate from L-aspartate: step 3/4. Catalyzes the condensation of (S)-aspartate-beta-semialdehyde [(S)-ASA] and pyruvate to 4-hydroxy-tetrahydrodipicolinate (HTPA). This Saccharophagus degradans (strain 2-40 / ATCC 43961 / DSM 17024) protein is 4-hydroxy-tetrahydrodipicolinate synthase.